A 156-amino-acid polypeptide reads, in one-letter code: Deoxyuridine 5'-triphosphate nucleotidohydrolase (156 aa).

Residues 76-78 (RSG), Asn89, 93-95 (TVD), and Lys103 contribute to the substrate site.

The protein belongs to the dUTPase family. The cofactor is Mg(2+).

The enzyme catalyses dUTP + H2O = dUMP + diphosphate + H(+). The protein operates within pyrimidine metabolism; dUMP biosynthesis; dUMP from dCTP (dUTP route): step 2/2. Functionally, this enzyme is involved in nucleotide metabolism: it produces dUMP, the immediate precursor of thymidine nucleotides and it decreases the intracellular concentration of dUTP so that uracil cannot be incorporated into DNA. The protein is Deoxyuridine 5'-triphosphate nucleotidohydrolase of Agrobacterium fabrum (strain C58 / ATCC 33970) (Agrobacterium tumefaciens (strain C58)).